The primary structure comprises 744 residues: Merozoite surface protein 9 (744 aa).

The N-terminal stretch at 1–23 (MMNMKIVLFSLLLFVIRWNIISC) is a signal peptide. The interval 77–235 (KELLKEKQYT…VNDEDDVNDE (159 aa)) is interaction with MSP1 and host SLC4A1/Band 3. Disordered stretches follow at residues 202–282 (KSQG…ATAY), 459–487 (DNQA…PTED), 512–540 (NNTP…ENFD), and 666–744 (VDAL…EESK). The segment covering 211 to 224 (SQNQNENNDNQKYQ) has biased composition (polar residues). Repeat copies occupy residues 226–231 (VNDEDD), 232–237 (VNDEED), 238–243 (TNDDED), 244–249 (TNDEED), 250–255 (TNDDED), 256–261 (TNDDED), 262–267 (TNDEED), and 268–273 (TNDEED). The interval 226–273 (VNDEDDVNDEEDTNDDEDTNDEEDTNDDEDTNDDEDTNDEEDTNDEED) is 8 X 6 AA tandem repeats of [VT]-N-D-[ED]-[ED]-D. Residues 226–274 (VNDEDDVNDEEDTNDDEDTNDEEDTNDDEDTNDDEDTNDEEDTNDEEDH) are compositionally biased toward acidic residues. The segment at 364–528 (LKDNLINYEF…PPTQSKKKNK (165 aa)) is interaction with MSP1 and host SLC4A1/Band 3. Residues 459 to 473 (DNQAVDTKSMEEPKV) are compositionally biased toward basic and acidic residues. The span at 512 to 521 (NNTPNVVPPT) shows a compositional bias: low complexity. Residues 644–734 (NQETEEEMEK…QEEEEEEEIV (91 aa)) are a coiled coil. Composition is skewed to basic and acidic residues over residues 672-698 (KNKE…KEKE) and 706-719 (EKEK…KEEK). Residues 720-734 (EKEEEQEEEEEEEIV) are compositionally biased toward acidic residues.

This sequence belongs to the plasmodium ABRA family. As to quaternary structure, forms a complex composed of MSP1, MSP6, MSP7, MSP9 and MSP3; within the complex, MSP6 and MSP9 mediate the binding to the host erythrocyte. Interacts with MSP1 subunits p19 and p42; the interaction is direct. Interacts with host SLC4A1/Band 3 protein (via the 5ABC region). MSP1 subunits p19 or p42, and MSP9 form a co-ligand complex that interacts with host SLC4A1/Band 3 protein. Post-translationally, not glycosylated.

Its subcellular location is the cell membrane. The protein resides in the parasitophorous vacuole lumen. It localises to the secreted. Its function is as follows. During the asexual blood stage, involved in the sialic acid-independent (SAID) merozoite invasion of host erythrocytes by binding to host SLC4A1/Band 3 protein on the surface of the host erythrocyte. This Plasmodium falciparum (isolate 7G8) protein is Merozoite surface protein 9.